The primary structure comprises 257 residues: UPF0246 protein CV_1250 (257 aa).

Belongs to the UPF0246 family.

This chain is UPF0246 protein CV_1250, found in Chromobacterium violaceum (strain ATCC 12472 / DSM 30191 / JCM 1249 / CCUG 213 / NBRC 12614 / NCIMB 9131 / NCTC 9757 / MK).